Consider the following 727-residue polypeptide: Zinc metalloproteinase nas-38 (727 aa).

A signal peptide spans 1-25 (MPSPSYNRHIIIASCFCCLLIFSSA). A propeptide spanning residues 26–114 (ARVPKASKKH…FTQGKREKRK (89 aa)) is cleaved from the precursor. One can recognise a Peptidase M12A domain in the interval 113–312 (RKIGRNPLYK…QAINMAYGCT (200 aa)). 2 disulfides stabilise this stretch: cysteine 158–cysteine 311 and cysteine 179–cysteine 199. Histidine 207 serves as a coordination point for Zn(2+). Residue glutamate 208 is part of the active site. Zn(2+) is bound by residues histidine 211 and histidine 217. The region spanning 306 to 345 (NMAYGCTESCADLPCLRNGYTHPNNCSMCACPEGLSGRYC) is the EGF-like domain. Asparagine 330 is a glycosylation site (N-linked (GlcNAc...) asparagine). The CUB domain maps to 353 to 469 (AQCGGVIFAT…AGFKAKFWSN (117 aa)). Cystine bridges form between cysteine 355/cysteine 383 and cysteine 411/cysteine 432. Disordered stretches follow at residues 473–506 (PEGV…QSTT) and 532–561 (TPLT…TEPS). Positions 535–554 (TSSSTTTESTTVSSTTQSTT) are enriched in low complexity. The TSP type-1 domain maps to 610–658 (ECGCGAWSEWQGECSQQCGGCGHRLRKRECKKEACRKEEKRPCNFSACP). Cystine bridges form between cysteine 611–cysteine 644, cysteine 623–cysteine 652, cysteine 627–cysteine 657, and cysteine 639–cysteine 644. Asparagine 653 and asparagine 714 each carry an N-linked (GlcNAc...) asparagine glycan.

Zn(2+) is required as a cofactor. As to expression, expressed in the epidermis, the excretory canal cell, duct cell, pore cell, and excretory gland cell. Expressed in an oscillating pattern in epithelial cells with increased expression during the lethargus phase which occurs during molting between larval and adult stages. Not expressed in seam cells or in the RIS neuron.

The protein resides in the secreted. In terms of biological role, metalloprotease. As part of the innate immune response to molting and injury to the adult epidermis, positively regulates the activity of the transcription factor sta-2 to promote the expression of epidermal antimicrobial peptides such as nlp-29. Through regulating the expression of epidermal antimicrobial peptides such as nlp-29, modulates sleep duration and locomotion quiescence during the sleep-like state called lethargus which occurs during molting between larval and adult stages. This may occur through the sleep-active RIS neuron. This chain is Zinc metalloproteinase nas-38, found in Caenorhabditis elegans.